A 241-amino-acid polypeptide reads, in one-letter code: uncharacterized protein (241 aa).

The disordered stretch occupies residues 19–53 (KRIGYGMGEKSSAGSSRDQTYSVKPASDVKDKKKV). A compositionally biased stretch (polar residues) spans 30–39 (SAGSSRDQTY).

This is an uncharacterized protein from Ostreid herpesvirus 1 (isolate France) (OsHV-1).